The following is an 88-amino-acid chain: Putative membrane protein insertion efficiency factor (88 aa).

The protein belongs to the UPF0161 family.

It is found in the cell inner membrane. Its function is as follows. Could be involved in insertion of integral membrane proteins into the membrane. The chain is Putative membrane protein insertion efficiency factor from Koribacter versatilis (strain Ellin345).